Consider the following 508-residue polypeptide: Pyruvate kinase (508 aa).

R56 contributes to the substrate binding site. Residues N58, S60, D90, and T91 each contribute to the K(+) site. An ATP-binding site is contributed by 58–61; that stretch reads NFSH. Residues R97 and K185 each coordinate ATP. A Mg(2+)-binding site is contributed by E251. 3 residues coordinate substrate: G274, D275, and T307. D275 provides a ligand contact to Mg(2+).

This sequence belongs to the pyruvate kinase family. Homotetramer. Mg(2+) serves as cofactor. The cofactor is K(+).

It carries out the reaction pyruvate + ATP = phosphoenolpyruvate + ADP + H(+). The protein operates within carbohydrate degradation; glycolysis; pyruvate from D-glyceraldehyde 3-phosphate: step 5/5. Regulated by phosphoenolpyruvate substrate and is allosterically activated by ribose-5-phosphate, AMP and other nucleoside monophosphates but not by fructose-1,6-bisphosphate. This is Pyruvate kinase (pyk) from Mycoplasma genitalium (strain ATCC 33530 / DSM 19775 / NCTC 10195 / G37) (Mycoplasmoides genitalium).